The primary structure comprises 402 residues: MEYQSGKRVLSLSLGLIGLFSASAWASDSRTVSEPKTPSSCTTLKADSSTATSTIQKALNNCDQGKAVRLSAGSTSVFLSGPLSLPSGVSLLIDKGVTLRAVNNAKSFENAPSSCGVVDKNGKGCDAFITAVSTTNSGIYGPGTIDGQGGVKLQDKKVSWWELAADAKVKKLKQNTPRLIQINKSKNFTLYNVSLINSPNFHVVFSDGDGFTAWKTTIKTPSTARNTDGIDPMSSKNITIAYSNIATGDDNVAIKAYKGRAETRNISILHNDFGTGHGMSIGSETMGVYNVTVDDLKMNGTTNGLRIKSDKSAAGVVNGVRYSNVVMKNVAKPIVIDTVYEKKEGSNVPDWSDITFKDVTSETKGVVVLNGENAKKPIEVTMKNVKLTSDSTWQIKNVNVKK.

The signal sequence occupies residues 1-23; that stretch reads MEYQSGKRVLSLSLGLIGLFSAS. Disulfide bonds link C41–C62 and C115–C125. Catalysis depends on D249, which acts as the Proton donor. H277 is a catalytic residue.

The protein belongs to the glycosyl hydrolase 28 family. As to quaternary structure, monomer.

It is found in the secreted. It catalyses the reaction (1,4-alpha-D-galacturonosyl)n+m + H2O = (1,4-alpha-D-galacturonosyl)n + (1,4-alpha-D-galacturonosyl)m.. In terms of biological role, involved in maceration and soft-rotting of plant tissue. The polypeptide is Endo-polygalacturonase (pehA) (Pectobacterium parmentieri).